A 594-amino-acid chain; its full sequence is DNA ligase 2 (594 aa).

Glutamate 250 is a binding site for ATP. Lysine 252 (N6-AMP-lysine intermediate) is an active-site residue. ATP is bound by residues arginine 257, arginine 273, glutamate 303, phenylalanine 343, arginine 419, and lysine 425.

It belongs to the ATP-dependent DNA ligase family. It depends on Mg(2+) as a cofactor.

It carries out the reaction ATP + (deoxyribonucleotide)n-3'-hydroxyl + 5'-phospho-(deoxyribonucleotide)m = (deoxyribonucleotide)n+m + AMP + diphosphate.. Its function is as follows. DNA ligase that seals nicks in double-stranded DNA during DNA replication, DNA recombination and DNA repair. The protein is DNA ligase 2 of Korarchaeum cryptofilum (strain OPF8).